A 976-amino-acid chain; its full sequence is Mast/stem cell growth factor receptor kita (976 aa).

The first 21 residues, 1–21, serve as a signal peptide directing secretion; that stretch reads MEYHCVLFTVLLQLIIQPGRS. At 22 to 515 the chain is on the extracellular side; that stretch reads RPTITPEGPR…NTVPHELFTP (494 aa). 5 Ig-like C2-type domains span residues 23–105, 100–199, 206–301, 308–402, and 399–504; these read PTIT…VYVK, IYVY…LTVR, PPIT…VWVN, INIT…FEVH, and FEVH…FSIS. N39 and N47 each carry an N-linked (GlcNAc...) asparagine glycan. Disulfide bonds link C44-C89, C131-C180, C146-C177, and C228-C285. 6 N-linked (GlcNAc...) asparagine glycosylation sites follow: N282, N309, N315, N352, N449, and N477. C422 and C488 are disulfide-bonded. The chain crosses the membrane as a helical span at residues 516 to 536; that stretch reads LLIGFVAAAVILVLILIVLTY. The Cytoplasmic portion of the chain corresponds to 537 to 976; that stretch reads KYMQKPKYQI…DRSSPSHPVV (440 aa). Position 559 (Y559) interacts with Mg(2+). Phosphotyrosine; by autocatalysis is present on residues Y559 and Y561. The region spanning 580 to 922 is the Protein kinase domain; the sequence is LRFGKTLGSG…ISDSTKHIYL (343 aa). Residues 587-594, K614, and 662-668 each bind ATP; these read GSGAFGKV and EYCCFGD. Phosphotyrosine; by autocatalysis is present on residues Y691 and Y707. Catalysis depends on D777, which acts as the Proton acceptor. R781 provides a ligand contact to ATP. Mg(2+) contacts are provided by N782 and D795. 2 positions are modified to phosphotyrosine; by autocatalysis: Y808 and Y921. The segment at 929 to 976 is disordered; the sequence is PAAPGPREESSSHVHRLNSVGSHSTATQPLLSSNDVFLDRSSPSHPVV. Over residues 947–976 the composition is skewed to polar residues; the sequence is SVGSHSTATQPLLSSNDVFLDRSSPSHPVV.

Belongs to the protein kinase superfamily. Tyr protein kinase family. CSF-1/PDGF receptor subfamily. Ubiquitinated. Rapidly ubiquitinated after autophosphorylation induced by kitlg/scf binding, leading to internalization and degradation. Post-translationally, autophosphorylated on tyrosine residues. Phosphorylated tyrosine residues are important for interaction with specific binding partners. As to expression, expressed in cells of the neural crest-melanocyte lineage. In the embryo, also expressed in mesodermal cells that give rise to hematopoietic precursors, notochord, neural crest-derived cells of the branchial arches, pineal gland, retina and mechanoreceptive sensory cells of lateral line neuromasts. Not detected in primordial germ cells or larval gut.

It localises to the cell membrane. The catalysed reaction is L-tyrosyl-[protein] + ATP = O-phospho-L-tyrosyl-[protein] + ADP + H(+). Tyrosine-protein kinase that acts as a cell-surface receptor for the cytokine kitlg/scf and plays a role in the regulation of cell survival and proliferation, hematopoiesis, stem cell maintenance, gametogenesis, and in mast cell development, migration and function. Required for the migration of cells in the melanocyte lineage and the survival of embryonic melanocytes. Required for the differentiation of some, but not all, melanocytes. Not essential for hematopoiesis or primordial germ cell development. This is Mast/stem cell growth factor receptor kita (kita) from Danio rerio (Zebrafish).